We begin with the raw amino-acid sequence, 161 residues long: GTP-dependent dephospho-CoA kinase (161 aa).

GTP is bound by residues Asp-40, Val-41, Val-42, Asp-59, Glu-112, and Glu-135.

This sequence belongs to the GTP-dependent DPCK family.

The catalysed reaction is 3'-dephospho-CoA + GTP = GDP + CoA + H(+). It participates in cofactor biosynthesis; coenzyme A biosynthesis. Its function is as follows. Catalyzes the GTP-dependent phosphorylation of the 3'-hydroxyl group of dephosphocoenzyme A to form coenzyme A (CoA). In Methanocorpusculum labreanum (strain ATCC 43576 / DSM 4855 / Z), this protein is GTP-dependent dephospho-CoA kinase.